The following is a 383-amino-acid chain: S-adenosylmethionine synthase (383 aa).

Residue His15 participates in ATP binding. Asp17 lines the Mg(2+) pocket. Position 43 (Glu43) interacts with K(+). L-methionine is bound by residues Glu56 and Gln99. Positions 99 to 109 (QSPDINQGVDR) are flexible loop. Residues 164-166 (DAK), 230-231 (RF), Asp239, 245-246 (RK), Ala262, and Lys266 contribute to the ATP site. Residue Asp239 coordinates L-methionine. Lys270 is a binding site for L-methionine.

The protein belongs to the AdoMet synthase family. As to quaternary structure, homotetramer; dimer of dimers. Mg(2+) serves as cofactor. K(+) is required as a cofactor.

It localises to the cytoplasm. The enzyme catalyses L-methionine + ATP + H2O = S-adenosyl-L-methionine + phosphate + diphosphate. It participates in amino-acid biosynthesis; S-adenosyl-L-methionine biosynthesis; S-adenosyl-L-methionine from L-methionine: step 1/1. Catalyzes the formation of S-adenosylmethionine (AdoMet) from methionine and ATP. The overall synthetic reaction is composed of two sequential steps, AdoMet formation and the subsequent tripolyphosphate hydrolysis which occurs prior to release of AdoMet from the enzyme. In Shewanella sp. (strain ANA-3), this protein is S-adenosylmethionine synthase.